Here is a 292-residue protein sequence, read N- to C-terminus: NAD kinase (292 aa).

D73 (proton acceptor) is an active-site residue. Residues 73 to 74 (DG), 147 to 148 (NE), H158, R175, D177, 188 to 193 (TAYSLS), and Q247 contribute to the NAD(+) site.

The protein belongs to the NAD kinase family. Requires a divalent metal cation as cofactor.

It is found in the cytoplasm. The catalysed reaction is NAD(+) + ATP = ADP + NADP(+) + H(+). In terms of biological role, involved in the regulation of the intracellular balance of NAD and NADP, and is a key enzyme in the biosynthesis of NADP. Catalyzes specifically the phosphorylation on 2'-hydroxyl of the adenosine moiety of NAD to yield NADP. In Escherichia coli (strain SMS-3-5 / SECEC), this protein is NAD kinase.